A 340-amino-acid polypeptide reads, in one-letter code: L-threonine 3-dehydrogenase (340 aa).

C38 is a Zn(2+) binding site. Residues T40 and H43 each act as charge relay system in the active site. The Zn(2+) site is built by H63, E64, C93, C96, C99, and C107. NAD(+) contacts are provided by residues I175, D195, R200, 262-264 (LGI), and 286-287 (IY).

Belongs to the zinc-containing alcohol dehydrogenase family. In terms of assembly, homotetramer. Requires Zn(2+) as cofactor.

The protein localises to the cytoplasm. It carries out the reaction L-threonine + NAD(+) = (2S)-2-amino-3-oxobutanoate + NADH + H(+). It functions in the pathway amino-acid degradation; L-threonine degradation via oxydo-reductase pathway; glycine from L-threonine: step 1/2. Functionally, catalyzes the NAD(+)-dependent oxidation of L-threonine to 2-amino-3-ketobutyrate. This chain is L-threonine 3-dehydrogenase, found in Pseudoalteromonas atlantica (strain T6c / ATCC BAA-1087).